Here is a 296-residue protein sequence, read N- to C-terminus: Ribosomal RNA small subunit methyltransferase A (296 aa).

Positions 28, 30, 55, 77, 103, and 122 each coordinate S-adenosyl-L-methionine.

It belongs to the class I-like SAM-binding methyltransferase superfamily. rRNA adenine N(6)-methyltransferase family. RsmA subfamily.

It localises to the cytoplasm. It carries out the reaction adenosine(1518)/adenosine(1519) in 16S rRNA + 4 S-adenosyl-L-methionine = N(6)-dimethyladenosine(1518)/N(6)-dimethyladenosine(1519) in 16S rRNA + 4 S-adenosyl-L-homocysteine + 4 H(+). In terms of biological role, specifically dimethylates two adjacent adenosines (A1518 and A1519) in the loop of a conserved hairpin near the 3'-end of 16S rRNA in the 30S particle. May play a critical role in biogenesis of 30S subunits. In Sinorhizobium fredii (strain NBRC 101917 / NGR234), this protein is Ribosomal RNA small subunit methyltransferase A.